Here is a 281-residue protein sequence, read N- to C-terminus: NADPH-dependent 7-cyano-7-deazaguanine reductase (281 aa).

Substrate is bound at residue 81 to 83; the sequence is IES. 83–84 serves as a coordination point for NADPH; sequence SK. C188 (thioimide intermediate) is an active-site residue. The active-site Proton donor is the D195. Residue 227–228 participates in substrate binding; it reads HE. Residue 256–257 coordinates NADPH; it reads RG.

Belongs to the GTP cyclohydrolase I family. QueF type 2 subfamily. In terms of assembly, homodimer.

Its subcellular location is the cytoplasm. The catalysed reaction is 7-aminomethyl-7-carbaguanine + 2 NADP(+) = 7-cyano-7-deazaguanine + 2 NADPH + 3 H(+). Its pathway is tRNA modification; tRNA-queuosine biosynthesis. Its function is as follows. Catalyzes the NADPH-dependent reduction of 7-cyano-7-deazaguanine (preQ0) to 7-aminomethyl-7-deazaguanine (preQ1). The chain is NADPH-dependent 7-cyano-7-deazaguanine reductase from Paracidovorax citrulli (strain AAC00-1) (Acidovorax citrulli).